The primary structure comprises 492 residues: Glutamate--tRNA ligase (492 aa).

The 'HIGH' region motif lies at 13–23 (PSPTGTPHVGM). A 'KMSKS' region motif is present at residues 257-261 (KLSKR). Residue lysine 260 participates in ATP binding.

The protein belongs to the class-I aminoacyl-tRNA synthetase family. Glutamate--tRNA ligase type 1 subfamily. Monomer.

It is found in the cytoplasm. The catalysed reaction is tRNA(Glu) + L-glutamate + ATP = L-glutamyl-tRNA(Glu) + AMP + diphosphate. Its function is as follows. Catalyzes the attachment of glutamate to tRNA(Glu) in a two-step reaction: glutamate is first activated by ATP to form Glu-AMP and then transferred to the acceptor end of tRNA(Glu). The protein is Glutamate--tRNA ligase of Mycolicibacterium paratuberculosis (strain ATCC BAA-968 / K-10) (Mycobacterium paratuberculosis).